A 287-amino-acid chain; its full sequence is UPF0761 membrane protein MS0032 (287 aa).

6 consecutive transmembrane segments (helical) span residues 37 to 57, 93 to 113, 128 to 148, 174 to 194, 204 to 224, and 238 to 258; these read MLAIVPLVMVVFAIFSAFPMF, SMSAVGIISLIAVALLLINQI, FIFSMTIYWTLLTLGPIFIGM, LLSFVPFLLTWLSFSLIYTLV, AAVGALVAAIFFTLGKKAFAW, and AMATLPITLLWIQLSWLFILL.

The protein belongs to the UPF0761 family.

Its subcellular location is the cell inner membrane. In Mannheimia succiniciproducens (strain KCTC 0769BP / MBEL55E), this protein is UPF0761 membrane protein MS0032.